Here is a 78-residue protein sequence, read N- to C-terminus: MKLSFLSLALAIIFVTVLIYAPQAEAKALADAVADADADADAAADAVADALADADAFKIPWGKIKDFVTGGIKEVAKG.

The first 26 residues, 1-26 (MKLSFLSLALAIIFVTVLIYAPQAEA), serve as a signal peptide directing secretion. A propeptide spanning residues 27-56 (KALADAVADADADADAAADAVADALADADA) is cleaved from the precursor. Residue Lys77 is modified to Lysine amide.

This sequence belongs to the formicidae venom precursor-01 superfamily. In terms of tissue distribution, expressed by the venom gland.

It localises to the secreted. Its function is as follows. Peptide with toxicity towards insects that may also act as antimicrobial peptide. Causes calcium influx in F11 cells (EC(50)=5.8 nM), possibly by modulating sodium channels (Nav). In vivo, is lethal to insects, but does not show toxicity to vertebrates. Intraplantar injection into mice does not induce spontaneous nocifensive behaviors up to a dose of 200 pmol. This is Myrmicitoxin-Ta2a from Tetramorium africanum (Fierce ant).